A 1192-amino-acid chain; its full sequence is DNA ligase 1 (1192 aa).

Disordered stretches follow at residues 29 to 257 (ELNK…KEKE) and 280 to 517 (EKEL…KSTQ). A compositionally biased stretch (basic and acidic residues) spans 42–56 (EAVVKEKVEKKEKKE). A compositionally biased stretch (acidic residues) spans 70 to 113 (EEEEEEQEEQDGEEEQEEEEEYQQQDEEIEEDINGEEEMELDEN). A compositionally biased stretch (basic and acidic residues) spans 141-155 (KTIENKETKKPEKQS). Acidic residues predominate over residues 172–198 (DDEEDEEDENKTDDNDLDDMLDDDSDN). Basic and acidic residues-rich tracts occupy residues 199-257 (EKDS…KEKE) and 280-368 (EKEL…RANA). Composition is skewed to low complexity over residues 371 to 382 (KSSVPTSTSKNS) and 410 to 434 (STTT…ISSP). Residues 435–467 (SKKEEKEVITSKKQVEATKVEVKKEKEKEKEKE) show a composition bias toward basic and acidic residues. Positions 468–511 (KEDDEEEEEEEEDDDEKLEDIDEEEYEEEEEEDEEGISENEEEE) are enriched in acidic residues. An interaction with target DNA region spans residues 724 to 733 (KLRIGLAERS). An ATP-binding site is contributed by glutamate 842. Lysine 844 (N6-AMP-lysine intermediate) is an active-site residue. ATP is bound by residues arginine 849 and arginine 865. Glutamate 897 contributes to the Mg(2+) binding site. The tract at residues 918 to 920 (ARK) is interaction with target DNA. Glutamate 996 is a binding site for Mg(2+). Lysine 1001, arginine 1014, and lysine 1020 together coordinate ATP. Positions 1157–1192 (DKSPEDATSSDQVVDMYQNQKINSQSSKINEKDEDY) are disordered. The span at 1162 to 1184 (DATSSDQVVDMYQNQKINSQSSK) shows a compositional bias: polar residues.

The protein belongs to the ATP-dependent DNA ligase family. Mg(2+) is required as a cofactor.

It is found in the nucleus. The catalysed reaction is ATP + (deoxyribonucleotide)n-3'-hydroxyl + 5'-phospho-(deoxyribonucleotide)m = (deoxyribonucleotide)n+m + AMP + diphosphate.. In terms of biological role, DNA ligase that seals nicks in double-stranded DNA during DNA replication, DNA recombination and DNA repair. This is DNA ligase 1 (lig1) from Dictyostelium discoideum (Social amoeba).